We begin with the raw amino-acid sequence, 243 residues long: Small ribosomal subunit protein eS4 (243 aa).

Residues isoleucine 43–asparagine 105 form the S4 RNA-binding domain.

The protein belongs to the eukaryotic ribosomal protein eS4 family.

The sequence is that of Small ribosomal subunit protein eS4 (rps4e) from Pyrococcus abyssi (strain GE5 / Orsay).